We begin with the raw amino-acid sequence, 856 residues long: Beta-galactosidase 3 (856 aa).

An N-terminal signal peptide occupies residues 1–31 (MREMGTGDSASRLILWFCLGFLILGVGFVQC). E189 acts as the Proton donor in catalysis. E258 functions as the Nucleophile in the catalytic mechanism. N468 is a glycosylation site (N-linked (GlcNAc...) asparagine). The region spanning 760–846 (TFHRPKVHLK…KRLTVEAVCA (87 aa)) is the SUEL-type lectin domain.

It belongs to the glycosyl hydrolase 35 family. Ubiquitous.

The protein localises to the secreted. It localises to the extracellular space. The protein resides in the apoplast. The catalysed reaction is Hydrolysis of terminal non-reducing beta-D-galactose residues in beta-D-galactosides.. This Arabidopsis thaliana (Mouse-ear cress) protein is Beta-galactosidase 3 (BGAL3).